A 476-amino-acid chain; its full sequence is Aspartyl/glutamyl-tRNA(Asn/Gln) amidotransferase subunit B (476 aa).

The protein belongs to the GatB/GatE family. GatB subfamily. Heterotrimer of A, B and C subunits.

The enzyme catalyses L-glutamyl-tRNA(Gln) + L-glutamine + ATP + H2O = L-glutaminyl-tRNA(Gln) + L-glutamate + ADP + phosphate + H(+). The catalysed reaction is L-aspartyl-tRNA(Asn) + L-glutamine + ATP + H2O = L-asparaginyl-tRNA(Asn) + L-glutamate + ADP + phosphate + 2 H(+). Allows the formation of correctly charged Asn-tRNA(Asn) or Gln-tRNA(Gln) through the transamidation of misacylated Asp-tRNA(Asn) or Glu-tRNA(Gln) in organisms which lack either or both of asparaginyl-tRNA or glutaminyl-tRNA synthetases. The reaction takes place in the presence of glutamine and ATP through an activated phospho-Asp-tRNA(Asn) or phospho-Glu-tRNA(Gln). This chain is Aspartyl/glutamyl-tRNA(Asn/Gln) amidotransferase subunit B, found in Bacillus velezensis (strain DSM 23117 / BGSC 10A6 / LMG 26770 / FZB42) (Bacillus amyloliquefaciens subsp. plantarum).